Consider the following 454-residue polypeptide: GTPase Der (454 aa).

2 consecutive EngA-type G domains span residues alanine 4–lysine 167 and leucine 188–glutamine 363. GTP contacts are provided by residues glycine 10–serine 17, aspartate 56–leucine 60, asparagine 121–glutamate 124, glycine 194–serine 201, aspartate 241–valine 245, and asparagine 306–aspartate 309. The KH-like domain occupies lysine 364 to lysine 450.

The protein belongs to the TRAFAC class TrmE-Era-EngA-EngB-Septin-like GTPase superfamily. EngA (Der) GTPase family. As to quaternary structure, associates with the 50S ribosomal subunit.

Its function is as follows. GTPase that plays an essential role in the late steps of ribosome biogenesis. The chain is GTPase Der from Orientia tsutsugamushi (strain Ikeda) (Rickettsia tsutsugamushi).